Here is a 305-residue protein sequence, read N- to C-terminus: Carbonic anhydrase 5A, mitochondrial (305 aa).

The transit peptide at 1–38 directs the protein to the mitochondrion; the sequence is MLGRNTWKTSAFSFLVEQMWAPLWSRSMRPGRWCSQRS. Residues 39–296 form the Alpha-carbonic anhydrase domain; the sequence is CAWQTSNNTL…LMNRKVWASF (258 aa). 3 residues coordinate Zn(2+): His130, His132, and His155.

The protein belongs to the alpha-carbonic anhydrase family. The cofactor is Zn(2+).

It is found in the mitochondrion. The catalysed reaction is hydrogencarbonate + H(+) = CO2 + H2O. Activated by L- and D-histidine. Activated by L- and D-phenylalanine. Activated by L-adrenaline. Inhibited by coumarins, sulfonamide derivatives such as acetazolamide and Foscarnet (phosphonoformate trisodium salt). Activated by histamine. Mitochondrial carbonic anhydrase that catalyzes the reversible conversion of carbon dioxide to bicarbonate/HCO3. Mitochondria are impermeable to HCO3, and thus this intramitochondrial carbonic anhydrase is pivotal in providing HCO3 for multiple mitochondrial enzymes that catalyze the formation of essential metabolites of intermediary metabolism in the urea and Krebs cycles. The protein is Carbonic anhydrase 5A, mitochondrial of Homo sapiens (Human).